Here is a 156-residue protein sequence, read N- to C-terminus: Transcription factor E (156 aa).

The HTH TFE/IIEalpha-type domain occupies 1–72; that stretch reads MYGEKAKKVL…LWILNIDQIE (72 aa).

This sequence belongs to the TFE family. As to quaternary structure, monomer. Interaction with RNA polymerase subunits RpoF and RpoE is necessary for Tfe stimulatory transcription activity. Able to interact with Tbp and RNA polymerase in the absence of DNA promoter. Interacts both with the preinitiation and elongation complexes.

Functionally, transcription factor that plays a role in the activation of archaeal genes transcribed by RNA polymerase. Facilitates transcription initiation by enhancing TATA-box recognition by TATA-box-binding protein (Tbp), and transcription factor B (Tfb) and RNA polymerase recruitment. Not absolutely required for transcription in vitro, but particularly important in cases where Tbp or Tfb function is not optimal. It dynamically alters the nucleic acid-binding properties of RNA polymerases by stabilizing the initiation complex and destabilizing elongation complexes. Seems to translocate with the RNA polymerase following initiation and acts by binding to the non template strand of the transcription bubble in elongation complexes. This is Transcription factor E from Staphylothermus marinus (strain ATCC 43588 / DSM 3639 / JCM 9404 / F1).